Here is a 489-residue protein sequence, read N- to C-terminus: Long chain base biosynthesis protein 2b (489 aa).

A helical transmembrane segment spans residues 2-22 (ITIPYLTAVSTYFSYGLLFAF). Lysine 311 is modified (N6-(pyridoxal phosphate)lysine).

This sequence belongs to the class-II pyridoxal-phosphate-dependent aminotransferase family. Heterodimer with LCB1. Component of the serine palmitoyltransferase (SPT) complex, composed of LCB1 and LCB2 (LCB2a or LCB2b). Pyridoxal 5'-phosphate is required as a cofactor. In terms of tissue distribution, ubiquitous with the highest expression in flowers.

The protein resides in the endoplasmic reticulum membrane. The catalysed reaction is L-serine + hexadecanoyl-CoA + H(+) = 3-oxosphinganine + CO2 + CoA. Its pathway is lipid metabolism; sphingolipid metabolism. In terms of biological role, serine palmitoyltransferase (SPT). The heterodimer formed with LCB1 constitutes the catalytic core. Plays an important role during male gametogenesis and embryogenesis. This Arabidopsis thaliana (Mouse-ear cress) protein is Long chain base biosynthesis protein 2b (LCB2b).